A 344-amino-acid polypeptide reads, in one-letter code: tRNA dimethylallyltransferase (344 aa).

43–50 (GPTCCGKS) contacts ATP. 45 to 50 (TCCGKS) lines the substrate pocket. Residues 68-71 (DSMQ) form an interaction with substrate tRNA region.

It belongs to the IPP transferase family. In terms of assembly, monomer. It depends on Mg(2+) as a cofactor.

The catalysed reaction is adenosine(37) in tRNA + dimethylallyl diphosphate = N(6)-dimethylallyladenosine(37) in tRNA + diphosphate. In terms of biological role, catalyzes the transfer of a dimethylallyl group onto the adenine at position 37 in tRNAs that read codons beginning with uridine, leading to the formation of N6-(dimethylallyl)adenosine (i(6)A). This is tRNA dimethylallyltransferase from Protochlamydia amoebophila (strain UWE25).